The sequence spans 158 residues: Transcription elongation factor GreA (158 aa).

Residues 47–68 (AEYDAAKEAQGLLEMRIAKLEE) are a coiled coil.

Belongs to the GreA/GreB family.

Functionally, necessary for efficient RNA polymerase transcription elongation past template-encoded arresting sites. The arresting sites in DNA have the property of trapping a certain fraction of elongating RNA polymerases that pass through, resulting in locked ternary complexes. Cleavage of the nascent transcript by cleavage factors such as GreA or GreB allows the resumption of elongation from the new 3'terminus. GreA releases sequences of 2 to 3 nucleotides. This Flavobacterium johnsoniae (strain ATCC 17061 / DSM 2064 / JCM 8514 / BCRC 14874 / CCUG 350202 / NBRC 14942 / NCIMB 11054 / UW101) (Cytophaga johnsonae) protein is Transcription elongation factor GreA.